We begin with the raw amino-acid sequence, 479 residues long: tRNA-2-methylthio-N(6)-dimethylallyladenosine synthase (479 aa).

One can recognise an MTTase N-terminal domain in the interval lysine 3–glutamate 120. The [4Fe-4S] cluster site is built by cysteine 12, cysteine 49, cysteine 83, cysteine 157, cysteine 161, and cysteine 164. Positions lysine 143 to alanine 375 constitute a Radical SAM core domain. The TRAM domain occupies arginine 378 to arginine 441.

The protein belongs to the methylthiotransferase family. MiaB subfamily. Monomer. [4Fe-4S] cluster is required as a cofactor.

The protein resides in the cytoplasm. The enzyme catalyses N(6)-dimethylallyladenosine(37) in tRNA + (sulfur carrier)-SH + AH2 + 2 S-adenosyl-L-methionine = 2-methylsulfanyl-N(6)-dimethylallyladenosine(37) in tRNA + (sulfur carrier)-H + 5'-deoxyadenosine + L-methionine + A + S-adenosyl-L-homocysteine + 2 H(+). In terms of biological role, catalyzes the methylthiolation of N6-(dimethylallyl)adenosine (i(6)A), leading to the formation of 2-methylthio-N6-(dimethylallyl)adenosine (ms(2)i(6)A) at position 37 in tRNAs that read codons beginning with uridine. The sequence is that of tRNA-2-methylthio-N(6)-dimethylallyladenosine synthase from Idiomarina loihiensis (strain ATCC BAA-735 / DSM 15497 / L2-TR).